The following is a 424-amino-acid chain: Histidine--tRNA ligase (424 aa).

Belongs to the class-II aminoacyl-tRNA synthetase family. Homodimer.

It localises to the cytoplasm. It catalyses the reaction tRNA(His) + L-histidine + ATP = L-histidyl-tRNA(His) + AMP + diphosphate + H(+). This Shewanella denitrificans (strain OS217 / ATCC BAA-1090 / DSM 15013) protein is Histidine--tRNA ligase.